We begin with the raw amino-acid sequence, 205 residues long: Transmembrane emp24 domain-containing protein A (205 aa).

The signal sequence occupies residues 1–24 (MMNNKLLLLVIALLCIASNSIVES). Topologically, residues 25–172 (FSFKVSAKVE…RNTAESTNSR (148 aa)) are lumenal. The 83-residue stretch at 34–116 (EECIYEEIGV…DKTVSFILSV (83 aa)) folds into the GOLD domain. The chain crosses the membrane as a helical span at residues 173–193 (VLWWSVFEAFVLIALSIWQIY). The Cytoplasmic segment spans residues 194–205 (YLRRFFEVKRAV).

This sequence belongs to the EMP24/GP25L family.

It is found in the cytoplasmic vesicle membrane. Its function is as follows. Could have a role in the budding of coatomer-coated and other species of coated vesicles. This chain is Transmembrane emp24 domain-containing protein A (empA), found in Dictyostelium discoideum (Social amoeba).